The primary structure comprises 583 residues: GTP diphosphokinase CRSH1, chloroplastic (583 aa).

Residues 1–13 show a composition bias toward low complexity; it reads MATAATTSAAAIP. The segment at 1 to 68 is disordered; it reads MATAATTSAA…SSSSSTPAEG (68 aa). A chloroplast-targeting transit peptide spans 1-69; sequence MATAATTSAA…SSSSTPAEGG (69 aa). Residues 19 to 39 are compositionally biased toward basic residues; the sequence is RRQHPHPRRPGLRPRRLHRLR. The span at 40 to 66 shows a compositional bias: low complexity; it reads LPAQAAAAAAASSPSTSSSSSSSSTPA. One can recognise an HD domain in the interval 119–219; the sequence is ALARALAIAA…LELALKLDMM (101 aa). EF-hand domains are found at residues 473-508 and 510-542; these read GDSNCTNRAFCQLDKNGDGRISIEELTEVMEDLGAG and KDAKELMHLLDANSDGSLSSDEFEAFQRQIELM. Residues aspartate 486, asparagine 488, aspartate 490, arginine 492, glutamate 497, aspartate 520, asparagine 522, aspartate 524, serine 526, and glutamate 531 each contribute to the Ca(2+) site.

Belongs to the RelA/SpoT family. In terms of tissue distribution, expressed in roots and shoots.

It localises to the plastid. It is found in the chloroplast. It carries out the reaction GTP + ATP = guanosine 3'-diphosphate 5'-triphosphate + AMP. Activated by calcium. Its function is as follows. Possesses calcium-dependent ppGpp (guanosine 3'-diphosphate 5'-diphosphate) synthetase activity in vitro and is able to functionally complement E.coli relA mutants. May be involved in a rapid plant ppGpp-mediated response to pathogens and other stresses. The protein is GTP diphosphokinase CRSH1, chloroplastic of Oryza sativa subsp. japonica (Rice).